The primary structure comprises 345 residues: Magnesium-chelatase 38 kDa subunit (345 aa).

Residue 35–42 coordinates ATP; the sequence is GDRGTGKS.

The protein belongs to the Mg-chelatase subunits D/I family.

It carries out the reaction protoporphyrin IX + Mg(2+) + ATP + H2O = Mg-protoporphyrin IX + ADP + phosphate + 3 H(+). The protein operates within porphyrin-containing compound metabolism; bacteriochlorophyll biosynthesis. In terms of biological role, involved in bacteriochlorophyll biosynthesis; introduces a magnesium ion into protoporphyrin IX to yield Mg-protoporphyrin IX. In Acidiphilium rubrum, this protein is Magnesium-chelatase 38 kDa subunit (bchI).